We begin with the raw amino-acid sequence, 416 residues long: 3-isopropylmalate dehydratase large subunit (416 aa).

Positions 297, 357, and 360 each coordinate [4Fe-4S] cluster.

It belongs to the aconitase/IPM isomerase family. LeuC type 2 subfamily. In terms of assembly, heterodimer of LeuC and LeuD. [4Fe-4S] cluster serves as cofactor.

The enzyme catalyses (2R,3S)-3-isopropylmalate = (2S)-2-isopropylmalate. It participates in amino-acid biosynthesis; L-leucine biosynthesis; L-leucine from 3-methyl-2-oxobutanoate: step 2/4. Functionally, catalyzes the isomerization between 2-isopropylmalate and 3-isopropylmalate, via the formation of 2-isopropylmaleate. The polypeptide is 3-isopropylmalate dehydratase large subunit (Methanoregula boonei (strain DSM 21154 / JCM 14090 / 6A8)).